Here is a 509-residue protein sequence, read N- to C-terminus: Glycerol kinase (509 aa).

Residue T12 participates in ADP binding. ATP-binding residues include T12, T13, and S14. T12 provides a ligand contact to sn-glycerol 3-phosphate. Residue R16 coordinates ADP. Positions 82, 83, 134, and 245 each coordinate sn-glycerol 3-phosphate. R82, E83, Y134, D245, and Q246 together coordinate glycerol. The ADP site is built by T267 and G311. The ATP site is built by T267, G311, Q315, and G412. 2 residues coordinate ADP: G412 and N416.

The protein belongs to the FGGY kinase family.

The catalysed reaction is glycerol + ATP = sn-glycerol 3-phosphate + ADP + H(+). It functions in the pathway polyol metabolism; glycerol degradation via glycerol kinase pathway; sn-glycerol 3-phosphate from glycerol: step 1/1. Its activity is regulated as follows. Inhibited by fructose 1,6-bisphosphate (FBP). Its function is as follows. Key enzyme in the regulation of glycerol uptake and metabolism. Catalyzes the phosphorylation of glycerol to yield sn-glycerol 3-phosphate. The polypeptide is Glycerol kinase (Rhizorhabdus wittichii (strain DSM 6014 / CCUG 31198 / JCM 15750 / NBRC 105917 / EY 4224 / RW1) (Sphingomonas wittichii)).